A 291-amino-acid polypeptide reads, in one-letter code: Homoserine kinase (291 aa).

ATP is bound at residue 80 to 90; it reads RPSSGLGSSAA.

It belongs to the GHMP kinase family. Homoserine kinase subfamily.

It is found in the cytoplasm. The catalysed reaction is L-homoserine + ATP = O-phospho-L-homoserine + ADP + H(+). Its pathway is amino-acid biosynthesis; L-threonine biosynthesis; L-threonine from L-aspartate: step 4/5. In terms of biological role, catalyzes the ATP-dependent phosphorylation of L-homoserine to L-homoserine phosphate. This Haloquadratum walsbyi (strain DSM 16790 / HBSQ001) protein is Homoserine kinase.